The chain runs to 84 residues: Defensin-like protein 199 (84 aa).

The N-terminal stretch at 1-24 (MAITMRTLVAFVFTIFFIISFVHS) is a signal peptide. Intrachain disulfides connect C40–C80, C47–C72, C56–C78, and C60–C79.

This sequence belongs to the DEFL family.

It is found in the secreted. This is Defensin-like protein 199 from Arabidopsis thaliana (Mouse-ear cress).